A 195-amino-acid polypeptide reads, in one-letter code: Probable DNA-directed RNA polymerase subunit delta (195 aa).

In terms of domain architecture, HTH HARE-type spans Leu-14 to Trp-83. 2 stretches are compositionally biased toward acidic residues: residues Asp-120 to Glu-138 and Tyr-145 to Glu-195. Residues Asp-120 to Glu-195 form a disordered region.

Belongs to the RpoE family. As to quaternary structure, RNAP is composed of a core of 2 alpha, a beta and a beta' subunits. The core is associated with a delta subunit and one of several sigma factors.

Functionally, participates in both the initiation and recycling phases of transcription. In the presence of the delta subunit, RNAP displays an increased specificity of transcription, a decreased affinity for nucleic acids, and an increased efficiency of RNA synthesis because of enhanced recycling. This Streptococcus pneumoniae serotype 2 (strain D39 / NCTC 7466) protein is Probable DNA-directed RNA polymerase subunit delta.